The chain runs to 698 residues: Polyribonucleotide nucleotidyltransferase (698 aa).

Positions 490 and 496 each coordinate Mg(2+). Residues 557–616 enclose the KH domain; it reads PKVVTMTIKPDKIRDVIGPGGKKINEIIDETGVKLDIEQDGTIFIGAVDQAMINRAREII. An S1 motif domain is found at 626–694; the sequence is GQTYQATVKR…KQGRVNASHR (69 aa).

The protein belongs to the polyribonucleotide nucleotidyltransferase family. It depends on Mg(2+) as a cofactor.

Its subcellular location is the cytoplasm. The enzyme catalyses RNA(n+1) + phosphate = RNA(n) + a ribonucleoside 5'-diphosphate. Its function is as follows. Involved in mRNA degradation. Catalyzes the phosphorolysis of single-stranded polyribonucleotides processively in the 3'- to 5'-direction. This chain is Polyribonucleotide nucleotidyltransferase, found in Staphylococcus aureus (strain bovine RF122 / ET3-1).